The following is a 241-amino-acid chain: 2-C-methyl-D-erythritol 4-phosphate cytidylyltransferase (241 aa).

It belongs to the IspD/TarI cytidylyltransferase family. IspD subfamily. Homodimer.

It carries out the reaction 2-C-methyl-D-erythritol 4-phosphate + CTP + H(+) = 4-CDP-2-C-methyl-D-erythritol + diphosphate. It participates in isoprenoid biosynthesis; isopentenyl diphosphate biosynthesis via DXP pathway; isopentenyl diphosphate from 1-deoxy-D-xylulose 5-phosphate: step 2/6. Catalyzes the formation of 4-diphosphocytidyl-2-C-methyl-D-erythritol from CTP and 2-C-methyl-D-erythritol 4-phosphate (MEP). In Yersinia pseudotuberculosis serotype IB (strain PB1/+), this protein is 2-C-methyl-D-erythritol 4-phosphate cytidylyltransferase.